Here is a 397-residue protein sequence, read N- to C-terminus: S-adenosylmethionine synthase (397 aa).

Residue His-17 participates in ATP binding. Asp-19 is a Mg(2+) binding site. Glu-45 serves as a coordination point for K(+). Residues Glu-58 and Gln-101 each contribute to the L-methionine site. The segment at 101–111 is flexible loop; that stretch reads QSPDIAQGVDK. Residues 176 to 178, 243 to 244, Asp-252, 258 to 259, and Lys-279 contribute to the ATP site; these read DGK, RF, and RK. L-methionine is bound at residue Asp-252. Lys-283 is a binding site for L-methionine.

Belongs to the AdoMet synthase family. As to quaternary structure, homotetramer; dimer of dimers. It depends on Mg(2+) as a cofactor. Requires K(+) as cofactor.

It is found in the cytoplasm. It carries out the reaction L-methionine + ATP + H2O = S-adenosyl-L-methionine + phosphate + diphosphate. Its pathway is amino-acid biosynthesis; S-adenosyl-L-methionine biosynthesis; S-adenosyl-L-methionine from L-methionine: step 1/1. Its function is as follows. Catalyzes the formation of S-adenosylmethionine (AdoMet) from methionine and ATP. The overall synthetic reaction is composed of two sequential steps, AdoMet formation and the subsequent tripolyphosphate hydrolysis which occurs prior to release of AdoMet from the enzyme. The polypeptide is S-adenosylmethionine synthase (Staphylococcus aureus (strain MRSA252)).